A 466-amino-acid chain; its full sequence is Adenosylhomocysteinase (466 aa).

3 residues coordinate substrate: Thr57, Asp132, and Glu192. Position 193-195 (193-195 (TTT)) interacts with NAD(+). Residues Lys222 and Asp226 each contribute to the substrate site. NAD(+) contacts are provided by residues Asn227, 256 to 261 (GYGDVG), Glu279, Asn314, 335 to 337 (IGH), and Asn380.

This sequence belongs to the adenosylhomocysteinase family. NAD(+) serves as cofactor.

The protein resides in the cytoplasm. It carries out the reaction S-adenosyl-L-homocysteine + H2O = L-homocysteine + adenosine. It participates in amino-acid biosynthesis; L-homocysteine biosynthesis; L-homocysteine from S-adenosyl-L-homocysteine: step 1/1. May play a key role in the regulation of the intracellular concentration of adenosylhomocysteine. The chain is Adenosylhomocysteinase from Brucella anthropi (strain ATCC 49188 / DSM 6882 / CCUG 24695 / JCM 21032 / LMG 3331 / NBRC 15819 / NCTC 12168 / Alc 37) (Ochrobactrum anthropi).